Here is a 364-residue protein sequence, read N- to C-terminus: UDP-N-acetylglucosamine--N-acetylmuramyl-(pentapeptide) pyrophosphoryl-undecaprenol N-acetylglucosamine transferase (364 aa).

UDP-N-acetyl-alpha-D-glucosamine contacts are provided by residues 15-17 (TGG), N123, R164, S191, and Q286.

This sequence belongs to the glycosyltransferase 28 family. MurG subfamily.

The protein localises to the cell inner membrane. It carries out the reaction di-trans,octa-cis-undecaprenyl diphospho-N-acetyl-alpha-D-muramoyl-L-alanyl-D-glutamyl-meso-2,6-diaminopimeloyl-D-alanyl-D-alanine + UDP-N-acetyl-alpha-D-glucosamine = di-trans,octa-cis-undecaprenyl diphospho-[N-acetyl-alpha-D-glucosaminyl-(1-&gt;4)]-N-acetyl-alpha-D-muramoyl-L-alanyl-D-glutamyl-meso-2,6-diaminopimeloyl-D-alanyl-D-alanine + UDP + H(+). The protein operates within cell wall biogenesis; peptidoglycan biosynthesis. In terms of biological role, cell wall formation. Catalyzes the transfer of a GlcNAc subunit on undecaprenyl-pyrophosphoryl-MurNAc-pentapeptide (lipid intermediate I) to form undecaprenyl-pyrophosphoryl-MurNAc-(pentapeptide)GlcNAc (lipid intermediate II). The protein is UDP-N-acetylglucosamine--N-acetylmuramyl-(pentapeptide) pyrophosphoryl-undecaprenol N-acetylglucosamine transferase of Prochlorococcus marinus (strain MIT 9515).